The following is a 299-amino-acid chain: Non-homologous end-joining factor 1 (299 aa).

The interval 1-135 (MEELEQGLLM…ASPSLVSQHL (135 aa)) is globular head. A coiled-coil region spans residues 128–170 (PSLVSQHLIRPLMGMSLALQCQVRELATLLHMKDLEIQDYQES). Phosphoserine; by PRKDC is present on residues Ser132, Ser203, Ser245, and Ser251. The segment at 224–288 (QEVQVGQKHQ…GPLQRPQLSK (65 aa)) is C-terminal tail. The segment covering 255 to 266 (NQPEQLVSSAPT) has biased composition (polar residues). The interval 255-299 (NQPEQLVSSAPTLSAPEKESTGTSGPLQRPQLSKVKRKKPRGLFS) is disordered. Position 263 is a phosphoserine (Ser263). The residue at position 266 (Thr266) is a Phosphothreonine. Position 287 is a phosphoserine (Ser287). The span at 288 to 299 (KVKRKKPRGLFS) shows a compositional bias: basic residues. Positions 289 to 299 (VKRKKPRGLFS) match the XLM motif.

It belongs to the XRCC4-XLF family. XLF subfamily. Homodimer; mainly exists as a homodimer when not associated with XRCC4. Interacts with XRCC4; the interaction is direct and is mediated via a head-to-head interaction between N-terminal head regions. Component of the core long-range non-homologous end joining (NHEJ) complex (also named DNA-PK complex) composed of PRKDC, LIG4, XRCC4, XRCC6/Ku70, XRCC5/Ku86 and NHEJ1/XLF. Additional component of the NHEJ complex includes PAXX. Following autophosphorylation, PRKDC dissociates from DNA, leading to formation of the short-range NHEJ complex, composed of LIG4, XRCC4, XRCC6/Ku70, XRCC5/Ku86 and NHEJ1/XLF. Interacts with POLL (DNA polymerase lambda); promoting POLL recruitment to double-strand breaks (DSBs) and stimulation of the end-filling activity of POLL. Post-translationally, phosphorylated by PRKDC at the C-terminus in response to DNA damage. Phosphorylations by PRKDC at the C-terminus of XRCC4 and NHEJ1/XLF are highly redundant and regulate ability of the XRCC4-NHEJ1/XLF subcomplex to bridge DNA. Phosphorylation does not prevent interaction with XRCC4 but disrupts ability to bridge DNA and promotes detachment from DNA. Ubiquitously expressed.

It localises to the nucleus. The protein resides in the chromosome. DNA repair protein involved in DNA non-homologous end joining (NHEJ); it is required for double-strand break (DSB) repair and V(D)J recombination and is also involved in telomere maintenance. Plays a key role in NHEJ by promoting the ligation of various mismatched and non-cohesive ends. Together with PAXX, collaborates with DNA polymerase lambda (POLL) to promote joining of non-cohesive DNA ends. May act in concert with XRCC5-XRCC6 (Ku) to stimulate XRCC4-mediated joining of blunt ends and several types of mismatched ends that are non-complementary or partially complementary. In some studies, has been shown to associate with XRCC4 to form alternating helical filaments that bridge DNA and act like a bandage, holding together the broken DNA until it is repaired. Alternatively, it has also been shown that rather than forming filaments, a single NHEJ1 dimer interacts through both head domains with XRCC4 to promote the close alignment of DNA ends. The XRCC4-NHEJ1/XLF subcomplex binds to the DNA fragments of a DSB in a highly diffusive manner and robustly bridges two independent DNA molecules, holding the broken DNA fragments in close proximity to one other. The mobility of the bridges ensures that the ends remain accessible for further processing by other repair factors. Binds DNA in a length-dependent manner. The polypeptide is Non-homologous end-joining factor 1 (Homo sapiens (Human)).